Consider the following 147-residue polypeptide: 3-dehydroquinate dehydratase (147 aa).

The active-site Proton acceptor is the tyrosine 23. Positions 75, 81, and 88 each coordinate substrate. Catalysis depends on histidine 101, which acts as the Proton donor. Substrate is bound by residues 102–103 (LS) and arginine 112.

This sequence belongs to the type-II 3-dehydroquinase family. As to quaternary structure, homododecamer.

It carries out the reaction 3-dehydroquinate = 3-dehydroshikimate + H2O. The protein operates within metabolic intermediate biosynthesis; chorismate biosynthesis; chorismate from D-erythrose 4-phosphate and phosphoenolpyruvate: step 3/7. Functionally, catalyzes a trans-dehydration via an enolate intermediate. This chain is 3-dehydroquinate dehydratase, found in Thioalkalivibrio sulfidiphilus (strain HL-EbGR7).